Here is a 540-residue protein sequence, read N- to C-terminus: MEEYKGVWLKAGIIYALNLASNGFKPVEVGLGERDFYVDVESDTTLTLDEAKKFATYNQYSYQLKDGYIEFNGNKIKVLGEPSSLEPKYFEILNISVHHPSPNVQYVRIRGVGFEKKEELDQYLKWLEEVSEYDHRIIGERLDLFSFPDETAPGLALFHYKGQIIRKELMKFMEEINESMGYQEVFTAEIYRSILWKTSGHYDYYKDKMVLFKMEDEELGLKPMNCPAHILIYKSKTRSYKDLPIRFSEFGLVFRWEKRGELYGLLRVRGFVQDDGHIFLTEDQIKDEVKMLVKKTIDVLSIFGFKGDDVRINLSTRPDESIGSDELWEKATNALVSALNELGIKYIVKEKEGAFYGPKIDFDIRDSLGRWWQLSTIQVDFNLPERFKLEYIDKDGSRKRPVMIHRAIYGSIERFMAILLEHFRGKLPTWLSPVQVRILPISKDVEDYALNLLSKLKENKIRVELDMSDETLSKRIKKAYDEGVPYMIIVGKKEREEGKVTVRGRNNVEIRGVKFDDFLKALLEEIRNRDLNQSAINKLK.

A catalytic region spans residues 134 to 428 (DHRIIGERLD…LLEHFRGKLP (295 aa)). Residues C226, H277, and H405 each contribute to the Zn(2+) site.

This sequence belongs to the class-II aminoacyl-tRNA synthetase family. In terms of assembly, homodimer. Probably interacts with its editing subunit. Zn(2+) serves as cofactor.

The protein resides in the cytoplasm. It carries out the reaction tRNA(Thr) + L-threonine + ATP = L-threonyl-tRNA(Thr) + AMP + diphosphate + H(+). In terms of biological role, catalyzes the attachment of threonine to tRNA(Thr) in a two-step reaction: L-threonine is first activated by ATP to form Thr-AMP and then transferred to the acceptor end of tRNA(Thr). Also activates L-serine and transfers it to tRNA(Thr) but cannot deacylate incorrectly charged amino acid; unlike most archaea the editing function is found in a freestanding protein. This chain is Threonine--tRNA ligase catalytic subunit, found in Sulfurisphaera tokodaii (strain DSM 16993 / JCM 10545 / NBRC 100140 / 7) (Sulfolobus tokodaii).